A 388-amino-acid polypeptide reads, in one-letter code: Mitochondrial distribution and morphology protein 12 (388 aa).

Positions 1 to 388 constitute an SMP-LTD domain; the sequence is MSLDINWSLL…VFPNFHTVAL (388 aa). Disordered stretches follow at residues 75–101 and 209–251; these read DDEGDFAEEEKQREKEREERDKLRNEA and PMSI…SSSS. A compositionally biased stretch (basic and acidic residues) spans 83–101; sequence EEKQREKEREERDKLRNEA. Over residues 234-243 the composition is skewed to pro residues; it reads PSPPAHPAGL.

This sequence belongs to the MDM12 family. As to quaternary structure, component of the ER-mitochondria encounter structure (ERMES) or MDM complex, composed of MMM1, MDM10, MDM12 and MDM34. An MMM1 homodimer associates with one molecule of MDM12 on each side in a pairwise head-to-tail manner, and the SMP-LTD domains of MMM1 and MDM12 generate a continuous hydrophobic tunnel for phospholipid trafficking.

It localises to the mitochondrion outer membrane. It is found in the endoplasmic reticulum membrane. Its function is as follows. Component of the ERMES/MDM complex, which serves as a molecular tether to connect the endoplasmic reticulum (ER) and mitochondria. Components of this complex are involved in the control of mitochondrial shape and protein biogenesis, and function in nonvesicular lipid trafficking between the ER and mitochondria. MDM12 is required for the interaction of the ER-resident membrane protein MMM1 and the outer mitochondrial membrane-resident beta-barrel protein MDM10. The MDM12-MMM1 subcomplex functions in the major beta-barrel assembly pathway that is responsible for biogenesis of all mitochondrial outer membrane beta-barrel proteins, and acts in a late step after the SAM complex. The MDM10-MDM12-MMM1 subcomplex further acts in the TOM40-specific pathway after the action of the MDM12-MMM1 complex. Essential for establishing and maintaining the structure of mitochondria and maintenance of mtDNA nucleoids. The chain is Mitochondrial distribution and morphology protein 12 from Cryptococcus neoformans var. neoformans serotype D (strain B-3501A) (Filobasidiella neoformans).